The following is a 200-amino-acid chain: NAD(P)H dehydrogenase (quinone) (200 aa).

A Flavodoxin-like domain is found at V4 to V190. FMN contacts are provided by residues S10–V15 and T78–Y80. Y12 contributes to the NAD(+) binding site. W98 provides a ligand contact to substrate. FMN-binding positions include S113–G119 and H134.

It belongs to the WrbA family. FMN is required as a cofactor.

The enzyme catalyses a quinone + NADH + H(+) = a quinol + NAD(+). It carries out the reaction a quinone + NADPH + H(+) = a quinol + NADP(+). This Methylobacterium radiotolerans (strain ATCC 27329 / DSM 1819 / JCM 2831 / NBRC 15690 / NCIMB 10815 / 0-1) protein is NAD(P)H dehydrogenase (quinone).